A 911-amino-acid chain; its full sequence is Alpha-actinin-4 (911 aa).

The tract at residues 1-269 (MVDYHAANQA…YVSSFYHAFS (269 aa)) is actin-binding. The segment at 12–26 (QYGPSSGGNGTGGGG) is interaction with VCL. The tract at residues 12-31 (QYGPSSGGNGTGGGGGMGDY) is disordered. Residues 16 to 29 (SSGGNGTGGGGGMG) show a composition bias toward gly residues. Tyrosine 31 bears the Phosphotyrosine mark. The interaction with VCL stretch occupies residues 40-61 (RDLLLDPAWEKQQRKTFTAWCN). Calponin-homology (CH) domains follow at residues 50-154 (KQQR…LRFA) and 163-269 (TSAK…HAFS). The short motif at 84–88 (LMLLL) is the LXXLL motif element. The tract at residues 108–126 (KINNVNKALDFIASKGVKL) is interaction with VCL. At lysine 114 the chain carries N6-acetyllysine. The tract at residues 177–192 (TAPYKNVNVQNFHISW) is polyphosphoinositide (PIP2)-binding. N6-acetyllysine is present on lysine 214. Threonine 249 is modified (phosphothreonine). Spectrin repeat units lie at residues 293–403 (HLME…WLLN), 413–518 (HLAE…ALEK), 528–639 (QLHL…ALLE), and 649–752 (HLRR…EVEN). N6-acetyllysine occurs at positions 592 and 625. Serine 696 is modified (phosphoserine). Positions 736-911 (WEQLLTTIAR…STALYGESDL (176 aa)) are mediates interaction with MICALL2. EF-hand domains follow at residues 765 to 800 (EQMQEFRASFNHFDKDHGGALGPEEFKACLISLGYD) and 806 to 841 (QGDAEFNRIMSVVDPNHSGLVTFQAFIDFMSRETTD). Ca(2+) is bound at residue aspartate 778. Lysine 779 bears the N6-acetyllysine mark. Positions 780 and 789 each coordinate Ca(2+). The residue at position 859 (lysine 859) is an N6-acetyllysine. Serine 909 carries the post-translational modification Phosphoserine.

Belongs to the alpha-actinin family. In terms of assembly, homodimer; antiparallel. Interacts with MAGI1. Interacts with MICALL2 (preferentially in opened conformation); stimulated by RAB13 activation. Identified in a IGF2BP1-dependent mRNP granule complex containing untranslated mRNAs. Component of the CART complex, at least composed of ACTN4, HGS/HRS, MYO5B and TRIM3. Binds TRIM3 at the N-terminus. Interacts with PDLIM2. Identified in a complex with CASK, IQGAP1, MAGI2, NPHS1, SPTAN1 and SPTBN1. Interacts with PPARG and RARA. Binds to VCL; this interaction triggers VCL conformational changes. Interacts with SEPTIN14. Interacts with IGSF8. In terms of tissue distribution, expressed in the foot process layer of podocytes in the kidney glomerulus but not in tubules (at protein level).

The protein resides in the nucleus. Its subcellular location is the cytoplasm. It localises to the cell junction. The protein localises to the cytoskeleton. It is found in the stress fiber. The protein resides in the perinuclear region. Functionally, F-actin cross-linking protein which is thought to anchor actin to a variety of intracellular structures. This is a bundling protein. Probably involved in vesicular trafficking via its association with the CART complex. The CART complex is necessary for efficient transferrin receptor recycling but not for EGFR degradation. Involved in tight junction assembly in epithelial cells probably through interaction with MICALL2. Links MICALL2 to the actin cytoskeleton and recruits it to the tight junctions. May also function as a transcriptional coactivator, stimulating transcription mediated by the nuclear hormone receptors PPARG and RARA. Association with IGSF8 regulates the immune synapse formation and is required for efficient T-cell activation. This is Alpha-actinin-4 from Rattus norvegicus (Rat).